A 629-amino-acid polypeptide reads, in one-letter code: MFYQDPFDVIIIGGGHAGTEAAMAAARMGQQTLLLTHNIDTLGQMSCNPAIGGIGKGHLVKEVDALGGLMAKAIDQAGIQFRILNASKGPAVRATRAQADRVLYRQAVRTALENQPNLMIFQQAVEDLIVENDRVVGAVTQMGLKFRAKAVVLTVGTFLDGKIHIGLDNYSGGRAGDPPSIPLSRRLRELPLRVSRLKTGTPPRIDARTIDFSVLAQQHGDNPMPVFSFMGNASQHPQQVPCYITHTNEKTHDVIRNNLDRSPMYAGVIEGIGPRYCPSIEDKVMRFADRNQHQIFLEPEGLTSNEIYPNGISTSLPFDVQMQIVRSMQGMENAKIVRPGYAIEYDFFDPRDLKPTLESKFIHGLFFAGQINGTTGYEEAAAQGLLAGLNAARLSADKEGWAPARSQAYLGVLVDDLCTLGTKEPYRMFTSRAEYRLMLREDNADLRLTEMGRELGLVDDERWARFNEKLENIERERQRLKSTWVTPSAESADEVNAHLTTPLSREASGEDLLRRPEMTYAQLTSLAAFAPALEDEQAAEQVEIQVKYEGYIARQQDEIEKQLRNENTLLPATLDYRQVSGLSNEVIAKLNDHKPASIGQASRISGVTPVAISILLVWLKKQGMLRRSA.

Residues 13 to 18 (GGGHAG), valine 125, and serine 180 each bind FAD. 273-287 (GPRYCPSIEDKVMRF) provides a ligand contact to NAD(+). Glutamine 370 contributes to the FAD binding site.

The protein belongs to the MnmG family. As to quaternary structure, homodimer. Heterotetramer of two MnmE and two MnmG subunits. It depends on FAD as a cofactor.

Its subcellular location is the cytoplasm. NAD-binding protein involved in the addition of a carboxymethylaminomethyl (cmnm) group at the wobble position (U34) of certain tRNAs, forming tRNA-cmnm(5)s(2)U34. The polypeptide is tRNA uridine 5-carboxymethylaminomethyl modification enzyme MnmG (Salmonella choleraesuis (strain SC-B67)).